The chain runs to 244 residues: Ribonuclease HII (244 aa).

Residues 23-236 form the RNase H type-2 domain; the sequence is KIILGLDEAG…SKKLLKEFEE (214 aa). Residues Asp29, Glu30, and Asp130 each coordinate a divalent metal cation.

It belongs to the RNase HII family. The cofactor is Mn(2+). It depends on Mg(2+) as a cofactor.

It is found in the cytoplasm. It carries out the reaction Endonucleolytic cleavage to 5'-phosphomonoester.. In terms of biological role, endonuclease that specifically degrades the RNA of RNA-DNA hybrids. The sequence is that of Ribonuclease HII from Methanococcus vannielii (strain ATCC 35089 / DSM 1224 / JCM 13029 / OCM 148 / SB).